The chain runs to 448 residues: Protein TraN (448 aa).

Disordered regions lie at residues 243-273 (NRVGASRTATTARAGQQQSPAVKQSSGNSGE) and 411-448 (EAARRHQALMRKQEQEKKQAQERERGRSQSLGLSNKPS). Low complexity predominate over residues 246-261 (GASRTATTARAGQQQS). Positions 262–271 (PAVKQSSGNS) are enriched in polar residues. Residues 421-437 (RKQEQEKKQAQERERGR) show a composition bias toward basic and acidic residues. Positions 438 to 448 (SQSLGLSNKPS) are enriched in polar residues.

The protein to H.influenzae HI_1407.

This Escherichia coli protein is Protein TraN (traN).